The sequence spans 125 residues: Large ribosomal subunit protein bL12 (125 aa).

Belongs to the bacterial ribosomal protein bL12 family. In terms of assembly, homodimer. Part of the ribosomal stalk of the 50S ribosomal subunit. Forms a multimeric L10(L12)X complex, where L10 forms an elongated spine to which 2 to 4 L12 dimers bind in a sequential fashion. Binds GTP-bound translation factors.

Its function is as follows. Forms part of the ribosomal stalk which helps the ribosome interact with GTP-bound translation factors. Is thus essential for accurate translation. This is Large ribosomal subunit protein bL12 from Sinorhizobium medicae (strain WSM419) (Ensifer medicae).